Reading from the N-terminus, the 525-residue chain is Sensory neuron membrane protein 1 (525 aa).

Over 1-11 (MLLPKPLKYAA) the chain is Cytoplasmic. A helical membrane pass occupies residues 12-32 (IGGGVFVFGILIGWVIFPVIL). The Extracellular portion of the chain corresponds to 33–456 (KSQIKKEMAL…LKHQLFIPKR (424 aa)). N67, N105, and N229 each carry an N-linked (GlcNAc...) asparagine glycan. 3 disulfide bridges follow: C268-C333, C297-C352, and C335-C341. N440 carries N-linked (GlcNAc...) asparagine glycosylation. A helical transmembrane segment spans residues 457–477 (IVGVIRWWMVSFGLIAVLAGV). Residues 478-525 (MYHFKDNIMGWAAKGESTTAKVNPEDGSNEQRGVSVIGQDREPPKVTM) are Cytoplasmic-facing. The interval 496–525 (TAKVNPEDGSNEQRGVSVIGQDREPPKVTM) is disordered. Residues 516 to 525 (QDREPPKVTM) are compositionally biased toward basic and acidic residues.

It belongs to the CD36 family. As to expression, principal component of the olfactory cilia membrane. Localizes to the somata, dendritic neck and cilia of the olfactory neurons (at protein level). Not detected in the axons of ORNs, the cytoplasm of auxiliary cells or non-sensory structures. Expression is universal among ORNs but differential between neuron and sensillum types.

The protein localises to the cell membrane. Functionally, plays an olfactory role that is not restricted to pheromone sensitivity. May be involved in the odor detection properties of the olfactory receptor neurons (ORNs) rather than their differentiation and growth. This Antheraea polyphemus (Polyphemus moth) protein is Sensory neuron membrane protein 1.